The primary structure comprises 334 residues: uncharacterized protein (334 aa).

WD repeat units follow at residues 56–86 (LKGE…KLWT), 98–128 (KPVA…RIWD), 139–169 (GHTS…EGWS), 220–250 (TDQG…RVFN), and 262–291 (LDDG…RVWN).

This is an uncharacterized protein from Synechocystis sp. (strain ATCC 27184 / PCC 6803 / Kazusa).